The chain runs to 129 residues: Lysozyme C (129 aa).

The 129-residue stretch at Lys1 to Leu129 folds into the C-type lysozyme domain. 4 cysteine pairs are disulfide-bonded: Cys6–Cys127, Cys30–Cys115, Cys64–Cys80, and Cys76–Cys94. Active-site residues include Glu35 and Asp52.

Belongs to the glycosyl hydrolase 22 family. In terms of assembly, monomer.

It localises to the secreted. The enzyme catalyses Hydrolysis of (1-&gt;4)-beta-linkages between N-acetylmuramic acid and N-acetyl-D-glucosamine residues in a peptidoglycan and between N-acetyl-D-glucosamine residues in chitodextrins.. Its function is as follows. Lysozymes have primarily a bacteriolytic function; those in tissues and body fluids are associated with the monocyte-macrophage system and enhance the activity of immunoagents. The chain is Lysozyme C (LYZ) from Numida meleagris (Helmeted guineafowl).